We begin with the raw amino-acid sequence, 140 residues long: Nucleoside diphosphate kinase (140 aa).

Residues Lys11, Phe59, Arg87, Thr93, Arg104, and Asn114 each coordinate ATP. His117 serves as the catalytic Pros-phosphohistidine intermediate.

It belongs to the NDK family. Homotetramer. It depends on Mg(2+) as a cofactor.

It localises to the cytoplasm. It catalyses the reaction a 2'-deoxyribonucleoside 5'-diphosphate + ATP = a 2'-deoxyribonucleoside 5'-triphosphate + ADP. The enzyme catalyses a ribonucleoside 5'-diphosphate + ATP = a ribonucleoside 5'-triphosphate + ADP. Major role in the synthesis of nucleoside triphosphates other than ATP. The ATP gamma phosphate is transferred to the NDP beta phosphate via a ping-pong mechanism, using a phosphorylated active-site intermediate. In Rickettsia bellii (strain OSU 85-389), this protein is Nucleoside diphosphate kinase.